A 151-amino-acid chain; its full sequence is Ubiquitin-conjugating enzyme E2 W (151 aa).

The UBC core domain maps to 3–151 (SMQKRLQKEL…TKWWYHDDTC (149 aa)). The active-site Glycyl thioester intermediate is C91.

The protein belongs to the ubiquitin-conjugating enzyme family.

Its subcellular location is the nucleus. It carries out the reaction S-ubiquitinyl-[E1 ubiquitin-activating enzyme]-L-cysteine + [E2 ubiquitin-conjugating enzyme]-L-cysteine = [E1 ubiquitin-activating enzyme]-L-cysteine + S-ubiquitinyl-[E2 ubiquitin-conjugating enzyme]-L-cysteine.. The enzyme catalyses S-ubiquitinyl-[E1 ubiquitin-activating enzyme]-L-cysteine + [acceptor protein]-N-terminal-amino acid = [E1 ubiquitin-activating enzyme]-L-cysteine + N-terminal-ubiquitinyl-[acceptor protein].. The protein operates within protein modification; protein ubiquitination. In terms of biological role, accepts ubiquitin from the E1 complex and catalyzes its covalent attachment to other proteins. Catalyzes monoubiquitination. Involved in degradation of misfolded chaperone substrate and DNA repair. This chain is Ubiquitin-conjugating enzyme E2 W (ube2w), found in Xenopus tropicalis (Western clawed frog).